Here is a 714-residue protein sequence, read N- to C-terminus: Macrophage-expressed gene 1 protein (714 aa).

Residues 1–19 form the signal peptide; sequence MNSFMAIALIWMMIACAEA. In terms of domain architecture, MACPF spans 30–345; that stretch reads GFQTCKDTLK…TAVRHYYTFN (316 aa). Residues Cys-34 and Cys-70 are joined by a disulfide bond. 2 consecutive transmembrane segments (beta stranded) span residues 113–120 and 127–132; these read FSINTELS and GKFSTE. Asn-185 carries N-linked (GlcNAc...) asparagine glycosylation. Beta stranded transmembrane passes span 235 to 244 and 248 to 256; these read TVTASAGIAF and VNFKVETDH. A glycan (N-linked (GlcNAc...) asparagine) is linked at Asn-269. Cys-350 and Cys-369 are joined by a disulfide. Asn-375 carries an N-linked (GlcNAc...) asparagine glycan. Disulfide bonds link Cys-385/Cys-394, Cys-432/Cys-446, Cys-436/Cys-442, Cys-531/Cys-569, and Cys-554/Cys-574. Residues 410–653 are P2; the sequence is PSGYTPVHLL…GDGNGMSGGE (244 aa). A helical membrane pass occupies residues 654 to 674; the sequence is AAGVTLGVIIALGIVITLAIY. A disordered region spans residues 690–714; it reads EQESLVGSFATDASPPNGEQDPCPA.

This sequence belongs to the MPEG1 family. In terms of assembly, homooligomer; predominantly forms a homooligomeric arc-shaped pore complex instead of complete rings of 16 subunits. Post-translationally, proteolytically processed in two steps to generate the Macrophage-expressed gene 1 protein, processed form: cleaved by trypsin in proximity of the helical transmembrane domain releases the ectodomain into the lysosomal lumen to orient the pore-forming domain toward the endogenous membranes, and processed by the asparagine endopeptidase (LGMN). Proteolytic processing in antigen-containing vesicles is pH-dependent. Monoubiquitinated in response to bacterial infection; ubiquitination is required for vesicular localization and antibacterial activity and can be blocked by bacterial cell cycle inhibiting factor (cif).

It localises to the cytoplasmic vesicle membrane. The protein resides in the cytoplasmic vesicle. It is found in the phagosome membrane. Its activity is regulated as follows. Forms arc- and ring-shaped pre-pores on top of the membrane at neutral to slightly acidic pH conditions and converts to pores upon acidification. Undergoes transition from the pre-pore to the pore in a processive clockwise hand-over-hand process. In the pore state, 2 alpha-helical regions refold into transmembrane hairpins (TMH1 and TMH2) in each protomer that form in the ensemble complex giant beta-barrel transmembrane pores. Its function is as follows. Pore-forming protein involved in both innate and adaptive immunity. Plays a central role in antigen cross-presentation in dendritic cells by forming a pore in antigen-containing compartments, thereby promoting delivery of antigens for cross-presentation. Also involved in innate immune response following bacterial infection; shows antibacterial activity against a wide spectrum of Gram-positive, Gram-negative and acid-fast bacteria. Reduces the viability of the intracytosolic pathogen L.monocytogenes by inhibiting acidification of the phagocytic vacuole of host cells which restricts bacterial translocation from the vacuole to the cytosol. Required for the antibacterial activity of reactive oxygen species and nitric oxide. In terms of biological role, pore-forming protein that plays a central role in antigen cross-presentation in dendritic cells by mediating delivery of antigens for cross-presentation. Dendritic cells bridge innate and adaptive immunity by capturing exogenous antigens on MHC class-I molecules and presenting them to naive CD8(+) T-cells. Acts by forming a pore in antigen-containing compartments, promoting the release of antigens into the cytosol, enabling generation of MHCI:peptide complexes and T-cell priming. In Rattus norvegicus (Rat), this protein is Macrophage-expressed gene 1 protein (Mpeg1).